The following is a 779-amino-acid chain: Acyl-homoserine lactone acylase PvdQ (779 aa).

An N-terminal signal peptide occupies residues 1-25 (MIISRPLCSFVFAGLSFAVILPAQA). The propeptide at 202–223 (AQQAQALQLAAARNQRFALERG) is spacer peptide. Ser224 serves as the catalytic Nucleophile. Positions 731 to 746 (ESSNPQSAHSSDQTEA) are enriched in polar residues. The tract at residues 731–750 (ESSNPQSAHSSDQTEAFSKK) is disordered.

The protein belongs to the peptidase S45 family. As to quaternary structure, heterodimer of an alpha subunit and a beta subunit processed from the same precursor.

It localises to the periplasm. The enzyme catalyses an N-acyl-L-homoserine lactone + H2O = L-homoserine lactone + a carboxylate. Its function is as follows. Catalyzes the deacylation of acyl-homoserine lactone (AHL or acyl-HSL), releasing homoserine lactone (HSL) and the corresponding fatty acid. Possesses a specificity for the degradation of long-chain acyl-HSLs (side chains of 11 to 14 carbons in length). This chain is Acyl-homoserine lactone acylase PvdQ (pvdQ), found in Pseudomonas syringae pv. syringae (strain B728a).